The primary structure comprises 488 residues: WD repeat-containing protein slp1 (488 aa).

2 disordered regions span residues 1–29 (MEIAGNSSTISPTFSTPTKKRNLVFPNSP) and 74–93 (CGSPRNKSRPASRSDRFIPS). Low complexity predominate over residues 7–17 (SSTISPTFSTP). WD repeat units follow at residues 178–215 (IDDYYLNLLDWSNLNVVAVALERNVYVWNADSGSVSAL), 219–258 (DESTYVASVKWSHDGSFLSVGLGNGLVDIYDVESQTKLRT), 261–298 (GHQARVGCLSWNRHVLSSGSRSGAIHHHDVRIANHQIG), 302–341 (GHSSEVCGLAWRSDGLQLASGGNDNVVQIWDARSSIPKFT), 344–386 (NHNA…RVNT), 388–429 (DAGS…LTKQ), and 434–473 (AHDTRVLYSALSPDGRILSTAASDENLKFWRVYDGDHVKR).

This sequence belongs to the WD repeat CDC20/Fizzy family. Interacts with cdc13, mad3 and mes1.

Functionally, required for mad2-dependent spindle checkpoint activation. Promotes ubiquitin-dependent degradation of cdc13 by the anaphase promoting complex/cyclosome (APC/C). The polypeptide is WD repeat-containing protein slp1 (slp1) (Schizosaccharomyces pombe (strain 972 / ATCC 24843) (Fission yeast)).